The following is a 625-amino-acid chain: DNA-directed RNA polymerase subunit gamma (625 aa).

The Zn(2+) site is built by Cys-71, Cys-73, Cys-86, and Cys-89. Mg(2+) contacts are provided by Asp-467, Asp-469, and Asp-471.

It belongs to the RNA polymerase beta' chain family. RpoC1 subfamily. As to quaternary structure, in cyanobacteria the RNAP catalytic core is composed of 2 alpha, 1 beta, 1 beta', 1 gamma and 1 omega subunit. When a sigma factor is associated with the core the holoenzyme is formed, which can initiate transcription. It depends on Mg(2+) as a cofactor. Zn(2+) is required as a cofactor.

The catalysed reaction is RNA(n) + a ribonucleoside 5'-triphosphate = RNA(n+1) + diphosphate. In terms of biological role, DNA-dependent RNA polymerase catalyzes the transcription of DNA into RNA using the four ribonucleoside triphosphates as substrates. This chain is DNA-directed RNA polymerase subunit gamma, found in Nostoc punctiforme (strain ATCC 29133 / PCC 73102).